We begin with the raw amino-acid sequence, 160 residues long: Nucleotide-binding protein Tola_0795 (160 aa).

The protein belongs to the YajQ family.

Functionally, nucleotide-binding protein. This is Nucleotide-binding protein Tola_0795 from Tolumonas auensis (strain DSM 9187 / NBRC 110442 / TA 4).